Consider the following 314-residue polypeptide: Target of rapamycin complex subunit wat1 (314 aa).

7 WD repeats span residues 1-35 (MSVQ…CSRT), 38-76 (HADS…QMPL), 81-120 (GHTN…VQRN), 122-161 (DHKS…CTHE), 165-204 (EEDV…GASL), 213-252 (AHQR…FMLE), and 257-296 (GHQR…TIRQ). Serine 141 bears the Phosphoserine mark.

It belongs to the WD repeat LST8 family. The target of rapamycin complex 1 (TORC1) is composed of at least mip1, pop3/wat1, tco89, toc1 and tor2. The target of rapamycin complex 2 (TORC2) is composed of at least bit61, pop3/wat1, sin1, ste20 and tor1. Interacts with prp2.

It is found in the cytoplasm. Its subcellular location is the nucleus. Functionally, component of both TORC1 and TORC2, which regulate multiple cellular processes to control cell growth in response to environmental signals. Nutrient limitation and environmental stress signals cause inactivation of TORC1. Active TORC1 positively controls cell growth and ribosome biogenesis by regulating ribosomal protein gene expression. TORC1 negatively controls G1 cell-cycle arrest, sexual development and amino acid uptake. Represses mating, meiosis and sporulation efficiency by interfering with the functions of the transcription factor ste11 and the meiosis-promoting RNA-binding protein mei2. TORC2 is required for cell survival under various stress conditions. TORC2 positively controls G1 cell-cycle arrest, sexual development and amino acid uptake. Positively regulates amino acid uptake through the control of expression of amino acid permeases. May play a role in mRNA maturation as a coupling protein between splicing and synthesis and/or stabilization. In Schizosaccharomyces pombe (strain 972 / ATCC 24843) (Fission yeast), this protein is Target of rapamycin complex subunit wat1.